Reading from the N-terminus, the 490-residue chain is Cytochrome P450 90D2 (490 aa).

The helical transmembrane segment at 4–24 (AAAGWAAPAFAVAAVVIWVVL) threads the bilayer. Residue Cys-437 participates in heme binding.

Belongs to the cytochrome P450 family. It depends on heme as a cofactor.

The protein resides in the membrane. The catalysed reaction is 6-deoxoteasterone + reduced [NADPH--hemoprotein reductase] + O2 = 3-dehydro-6-deoxoteasterone + oxidized [NADPH--hemoprotein reductase] + 2 H2O + H(+). The protein operates within plant hormone biosynthesis; brassinosteroid biosynthesis. In terms of biological role, catalyzes the C6-oxidation step in brassinosteroids biosynthesis. May convert 6-deoxoteasterone (6-deoxoTE) to 3-dehydro-6-deoxoteasterone (6-deoxo3DT, 6-deoxo3DHT), and teasterone (TE) to 3-dehydroteasterone (3DT, 3-DHT). Involved in the elongation of leaf sheaths and stems. The protein is Cytochrome P450 90D2 of Oryza sativa subsp. indica (Rice).